A 136-amino-acid chain; its full sequence is MVKILKPGKVALITRGRFAGKKVVILQAIDQGSKSHPFGHAVVAGVERYPLKVTKSMGAKRIARRSRVKPFIKVVNYNHLMPTRYALELDNLKGLITADTFKEPTQRSAARKTVKKTFEEKYQSGKSAWFFTPLRF.

Belongs to the eukaryotic ribosomal protein eL27 family. In terms of assembly, component of the large ribosomal subunit (LSU). Mature yeast ribosomes consist of a small (40S) and a large (60S) subunit. The 40S small subunit contains 1 molecule of ribosomal RNA (18S rRNA) and at least 33 different proteins. The large 60S subunit contains 3 rRNA molecules (25S, 5.8S and 5S rRNA) and at least 46 different proteins.

Its subcellular location is the cytoplasm. The protein localises to the nucleus. In terms of biological role, component of the ribosome, a large ribonucleoprotein complex responsible for the synthesis of proteins in the cell. The small ribosomal subunit (SSU) binds messenger RNAs (mRNAs) and translates the encoded message by selecting cognate aminoacyl-transfer RNA (tRNA) molecules. The large subunit (LSU) contains the ribosomal catalytic site termed the peptidyl transferase center (PTC), which catalyzes the formation of peptide bonds, thereby polymerizing the amino acids delivered by tRNAs into a polypeptide chain. The nascent polypeptides leave the ribosome through a tunnel in the LSU and interact with protein factors that function in enzymatic processing, targeting, and the membrane insertion of nascent chains at the exit of the ribosomal tunnel. The protein is Large ribosomal subunit protein eL27A (rpl2701) of Schizosaccharomyces pombe (strain 972 / ATCC 24843) (Fission yeast).